A 352-amino-acid chain; its full sequence is MAAQTLLELQPSNQSQLSALNTTSCDNAREAWDLLYQVLPIFILTICAFGLLGNLFVLSVFLLLRRRLTVAEIYLVNLAASDLVFVLGLPFWAQNIWNQFNWPFGDLLCRVVNGVIKANLFISIFLMVAISQDRYCVLVHPMASRRRRRRRRARATCMVIWAVGALLSTPTFLLRSVSAVQDLNISACILLLPHQAWHVARIVELNVLGFLLPLAAIIFFNGHILASLRGQGEVSQTRIGGPKDCKTTVLILTLVAAFLVCWAPYHCFAFLEFLFQVRAVRGCFWEDFIDLGLQLANFFAFTNSCLNPVIYVFVGRLFRTKVWELYQQCTPRRPAPLSSSRRKEILRRFWRN.

Topologically, residues 1–41 (MAAQTLLELQPSNQSQLSALNTTSCDNAREAWDLLYQVLPI) are extracellular. Asn13 and Asn21 each carry an N-linked (GlcNAc...) asparagine glycan. Residues 42–62 (FILTICAFGLLGNLFVLSVFL) form a helical membrane-spanning segment. Residues 63–72 (LLRRRLTVAE) lie on the Cytoplasmic side of the membrane. A helical transmembrane segment spans residues 73–93 (IYLVNLAASDLVFVLGLPFWA). At 94–110 (QNIWNQFNWPFGDLLCR) the chain is on the extracellular side. Cys109 and Cys188 form a disulfide bridge. A helical transmembrane segment spans residues 111-131 (VVNGVIKANLFISIFLMVAIS). Residues 132 to 153 (QDRYCVLVHPMASRRRRRRRRA) lie on the Cytoplasmic side of the membrane. A helical membrane pass occupies residues 154 to 174 (RATCMVIWAVGALLSTPTFLL). The Extracellular portion of the chain corresponds to 175-206 (RSVSAVQDLNISACILLLPHQAWHVARIVELN). A glycan (N-linked (GlcNAc...) asparagine) is linked at Asn184. Residues 207–227 (VLGFLLPLAAIIFFNGHILAS) traverse the membrane as a helical segment. Topologically, residues 228-250 (LRGQGEVSQTRIGGPKDCKTTVL) are cytoplasmic. The helical transmembrane segment at 251-271 (ILTLVAAFLVCWAPYHCFAFL) threads the bilayer. Over 272–294 (EFLFQVRAVRGCFWEDFIDLGLQ) the chain is Extracellular. Residues 295-315 (LANFFAFTNSCLNPVIYVFVG) traverse the membrane as a helical segment. The Cytoplasmic segment spans residues 316-326 (RLFRTKVWELY). The S-palmitoyl cysteine moiety is linked to residue Cys329.

The protein belongs to the G-protein coupled receptor 1 family. Bradykinin receptor subfamily. BDKRB1 sub-subfamily.

Its subcellular location is the cell membrane. Functionally, this is a receptor for bradykinin. Could be a factor in chronic pain and inflammation. The polypeptide is B1 bradykinin receptor (BDKRB1) (Tupaia minor (Pigmy tree shrew)).